The following is a 249-amino-acid chain: Carboxy-S-adenosyl-L-methionine synthase (249 aa).

S-adenosyl-L-methionine is bound by residues Tyr-39, 64–66 (GCS), 117–118 (DI), Asn-132, and Arg-199.

Belongs to the class I-like SAM-binding methyltransferase superfamily. Cx-SAM synthase family. Homodimer.

It catalyses the reaction prephenate + S-adenosyl-L-methionine = carboxy-S-adenosyl-L-methionine + 3-phenylpyruvate + H2O. Catalyzes the conversion of S-adenosyl-L-methionine (SAM) to carboxy-S-adenosyl-L-methionine (Cx-SAM). This Aeromonas hydrophila subsp. hydrophila (strain ATCC 7966 / DSM 30187 / BCRC 13018 / CCUG 14551 / JCM 1027 / KCTC 2358 / NCIMB 9240 / NCTC 8049) protein is Carboxy-S-adenosyl-L-methionine synthase.